We begin with the raw amino-acid sequence, 519 residues long: 3-octaprenyl-4-hydroxybenzoate carboxy-lyase (519 aa).

Residue Asn177 coordinates Mn(2+). Residues 180–182 (IYR), 194–196 (RWL), and 199–200 (RG) contribute to the prenylated FMN site. Glu243 lines the Mn(2+) pocket. Catalysis depends on Asp318, which acts as the Proton donor.

This sequence belongs to the UbiD family. In terms of assembly, homohexamer. It depends on prenylated FMN as a cofactor. Requires Mn(2+) as cofactor.

Its subcellular location is the cell membrane. It catalyses the reaction a 4-hydroxy-3-(all-trans-polyprenyl)benzoate + H(+) = a 2-(all-trans-polyprenyl)phenol + CO2. The protein operates within cofactor biosynthesis; ubiquinone biosynthesis. Its function is as follows. Catalyzes the decarboxylation of 3-octaprenyl-4-hydroxy benzoate to 2-octaprenylphenol, an intermediate step in ubiquinone biosynthesis. The polypeptide is 3-octaprenyl-4-hydroxybenzoate carboxy-lyase (Burkholderia thailandensis (strain ATCC 700388 / DSM 13276 / CCUG 48851 / CIP 106301 / E264)).